Consider the following 269-residue polypeptide: Aquaporin-1 (269 aa).

Residues A2–W11 are Cytoplasmic-facing. The chain crosses the membrane as a helical span at residues R12–I29. Over G30 to V46 the chain is Extracellular. An N-linked (GlcNAc...) asparagine glycan is attached at N42. Residues Q47 to Q65 traverse the membrane as a helical segment. At S66–G68 the chain is on the cytoplasmic side. An intramembrane segment occupies H69–G82. An NPA 1 motif is present at residues N76 to A78. The Cytoplasmic segment spans residues L83–S90. The chain crosses the membrane as a helical span at residues I91 to T109. The Extracellular segment spans residues A110–V133. The helical transmembrane segment at N134 to V153 threads the bilayer. Over L154–D163 the chain is Cytoplasmic. Residues L164–L181 traverse the membrane as a helical segment. Residues L182–Y186 are Extracellular-facing. The stretch at T187–S199 is an intramembrane region. Residues N192–A194 carry the NPA 2 motif. At A200 to F206 the chain is on the extracellular side. N205 is a glycosylation site (N-linked (GlcNAc...) asparagine). The helical transmembrane segment at S207–V224 threads the bilayer. Residues L225–K269 are Cytoplasmic-facing. S247 carries the post-translational modification Phosphoserine. Position 253 is a phosphotyrosine (Y253). The residue at position 262 (S262) is a Phosphoserine.

The protein belongs to the MIP/aquaporin (TC 1.A.8) family. In terms of assembly, homotetramer; each monomer provides an independent water pore. Component of the ankyrin-1 complex in the erythrocyte, composed of ANK1, RHCE, RHAG, SLC4A1, EPB42, GYPA, GYPB and AQP1. Interacts with EPHB2; involved in endolymph production in the inner ear. Identified in a complex with STOM. Interacts (via the N-terminal) with ANK1 (via ANK 1-5 repeats). Interacts (via the C-terminal) with EPB42. In terms of tissue distribution, detected in erythrocytes (at protein level). Expressed in a number of tissues including erythrocytes, renal tubules, retinal pigment epithelium, heart, lung, skeletal muscle, kidney and pancreas. Weakly expressed in brain, placenta and liver.

The protein localises to the cell membrane. It catalyses the reaction H2O(in) = H2O(out). It carries out the reaction nitric oxide(out) = nitric oxide(in). The enzyme catalyses CO2(out) = CO2(in). The catalysed reaction is glycerol(in) = glycerol(out). It catalyses the reaction H2O2(out) = H2O2(in). It carries out the reaction K(+)(in) = K(+)(out). The enzyme catalyses Na(+)(in) = Na(+)(out). The water channel activity is inhibited by P-choloromercuribenzene sulphonate and diethylpyrocarbonate(DPPC). The glycerol channel activity is inhibited by P-choloromercuribenzene sulphonate, diethylpyrocarbonate(DPPC), phloretin and Cu(2+). Inhibited by mercury. Forms a water channel that facilitates the transport of water across cell membranes, playing a crucial role in water homeostasis in various tissues. Could also be permeable to small solutes including hydrogen peroxide, glycerol and gases such as amonnia (NH3), nitric oxide (NO) and carbon dioxide (CO2). Recruited to the ankyrin-1 complex, a multiprotein complex of the erythrocyte membrane, it could be part of a CO2 metabolon, linking facilitated diffusion of CO2 across the membrane, anion exchange of Cl(-)/HCO3(-) and interconversion of dissolved CO2 and carbonic acid in the cytosol. In vitro, it shows non-selective gated cation channel activity and may be permeable to cations like K(+) and Na(+) in vivo. The polypeptide is Aquaporin-1 (Homo sapiens (Human)).